Consider the following 332-residue polypeptide: L-lactate dehydrogenase A chain (332 aa).

NAD(+) contacts are provided by residues 29-57 and R99; that span reads GAVG…IEDK. Positions 106, 138, and 169 each coordinate substrate. Position 138 (N138) interacts with NAD(+). H193 serves as the catalytic Proton acceptor. T248 lines the substrate pocket.

The protein belongs to the LDH/MDH superfamily. LDH family. As to quaternary structure, homotetramer.

Its subcellular location is the cytoplasm. It carries out the reaction (S)-lactate + NAD(+) = pyruvate + NADH + H(+). The protein operates within fermentation; pyruvate fermentation to lactate; (S)-lactate from pyruvate: step 1/1. Its function is as follows. Interconverts simultaneously and stereospecifically pyruvate and lactate with concomitant interconversion of NADH and NAD(+). The protein is L-lactate dehydrogenase A chain (LDHA) of Pelodiscus sinensis japonicus (Chinese soft-shelled turtle).